The sequence spans 1851 residues: Chitin synthase (1851 aa).

Residues 1 to 21 form a disordered region; sequence MQYHQHQHQFPGPGPSHTSVY. Topologically, residues 1–108 are cytoplasmic; the sequence is MQYHQHQHQF…KDTLYNGFLQ (108 aa). A helical membrane pass occupies residues 109-129; sequence VLKMITFVALFVTTLGSSILA. At 130–168 the chain is on the extracellular side; that stretch reads KLSLLVMAAGLGQAGHNISICPDKIPESPKNSVLISPKN. N-linked (GlcNAc...) asparagine glycosylation is present at Asn-146. The chain crosses the membrane as a helical span at residues 169 to 189; the sequence is AAKWAWALLLAICIPELLCFA. Over 190–208 the chain is Cytoplasmic; that stretch reads RSLHRSLFRKVRGPSFLQF. The chain crosses the membrane as a helical span at residues 209 to 229; the sequence is LLVFTVESVHAFGLGALVFAI. At 230–234 the chain is on the extracellular side; the sequence is MPRGM. A helical transmembrane segment spans residues 235–255; sequence VITMLQLGNSLCLIPSLLLPL. Residues 256 to 261 lie on the Cytoplasmic side of the membrane; it reads SRSRSR. The helical transmembrane segment at 262–282 threads the bilayer; the sequence is WLPLLLLLDGSAILAQSSAAI. Residues 283–291 are Extracellular-facing; the sequence is WRGSIPLER. A helical membrane pass occupies residues 292–312; sequence FGFVFLCTSLISIAWWQNFVH. At 313 to 337 the chain is on the cytoplasmic side; the sequence is PHSFLPATRFFAHYAAKLRECRSKT. A helical membrane pass occupies residues 338–358; sequence FVVLSPWKCLIFTFCMFQFVP. Residues 359–544 are Extracellular-facing; that stretch reads PQIPFRELLQ…ELNQFTTAND (186 aa). N-linked (GlcNAc...) asparagine glycans are attached at residues Asn-385 and Asn-435. The disordered stretch occupies residues 432–522; it reads LFRNGTRRPP…DADEQEEEEE (91 aa). The span at 442-454 shows a compositional bias: basic and acidic residues; the sequence is KKEEVKKNKMDSK. Positions 455 to 465 are enriched in basic residues; it reads KKTKKLKKKKG. Residues 466-478 show a composition bias toward low complexity; that stretch reads GNNNATSTNSSEK. Residues Asn-469 and Asn-474 are each glycosylated (N-linked (GlcNAc...) asparagine). The span at 513–522 shows a compositional bias: acidic residues; that stretch reads DADEQEEEEE. The chain crosses the membrane as a helical span at residues 545–565; that stretch reads ALWLVFVQAGSVLLCQLCAKF. Residues 566 to 573 are Cytoplasmic-facing; sequence ACKVVMQR. A helical membrane pass occupies residues 574–594; the sequence is VGLALPVVLSIPFGILFLAYS. Residues 595–631 are Extracellular-facing; that stretch reads CRQKATNPCHLSEWMSKELFWQCPTRPFHWQRFFREQ. The chain crosses the membrane as a helical span at residues 632–652; that stretch reads PNLLWLCWWLSQCWITIHLWL. Residues 653–1124 lie on the Cytoplasmic side of the membrane; that stretch reads PRQERLAKSE…VSIWYIAYQL (472 aa). Positions 693–718 are disordered; it reads SEDIDTEEEANEGGGEQEDGNSSTHT. The span at 696–711 shows a compositional bias: acidic residues; it reads IDTEEEANEGGGEQED. A helical membrane pass occupies residues 1125–1145; it reads VMLFSSVLGPGTIFLMIVGAI. The Extracellular segment spans residues 1146–1154; sequence SISFNIDTR. A helical transmembrane segment spans residues 1155 to 1175; that stretch reads LALLIVTTPVLCFCVCCLTCG. Residues 1176 to 1179 are Cytoplasmic-facing; that stretch reads TETQ. The chain crosses the membrane as a helical span at residues 1180-1200; sequence LLLAQVIGALFAMLMTAVIVG. Topologically, residues 1201–1209 are extracellular; sequence TSLQIQKDG. Residues 1210 to 1230 form a helical membrane-spanning segment; that stretch reads LLSPHSIFLFTVLGSWSFSAL. At 1231 to 1235 the chain is on the cytoplasmic side; sequence LHPLE. The chain crosses the membrane as a helical span at residues 1236–1256; the sequence is FGCLLPCGLYFLAIPCMYMLL. The Extracellular segment spans residues 1257-1461; that stretch reads PVYSLCNLNT…QRGLNELRNT (205 aa). Asn-1274 carries N-linked (GlcNAc...) asparagine glycosylation. The stretch at 1329-1383 forms a coiled coil; it reads CADETVEVRKLDENFRKIERKLQSLERRTNGQGNNAEEEGKEEEETGKSEQERKE. The segment at 1350–1402 is disordered; the sequence is LQSLERRTNGQGNNAEEEGKEEEETGKSEQERKEGREEGKEEEGKMSKRKKEE. The span at 1364–1373 shows a compositional bias: acidic residues; that stretch reads AEEEGKEEEE. Basic and acidic residues predominate over residues 1374 to 1402; sequence TGKSEQERKEGREEGKEEEGKMSKRKKEE. Residues 1462–1482 traverse the membrane as a helical segment; that stretch reads CCSAFFMVNIVFIIVVLVLQL. Residues 1483-1527 lie on the Cytoplasmic side of the membrane; the sequence is QKDCLHIEWPLGPLVNQTRVQCGGGGGRDFEGEEWIMSRLQLEPM. The chain crosses the membrane as a helical span at residues 1528–1548; the sequence is GFVFIVFFLIILFIQFLAMLF. Residues 1549–1851 lie on the Extracellular side of the membrane; sequence HRFGTFTHII…FLGTTNKRAK (303 aa). The segment at 1626 to 1658 is disordered; sequence GKRQQNAQIPPRCEKGGNERGEESPTSLPAPPV. The segment covering 1637-1648 has biased composition (basic and acidic residues); sequence RCEKGGNERGEE. Asn-1660 is a glycosylation site (N-linked (GlcNAc...) asparagine). Residues 1765–1851 form a disordered region; it reads HSIFPSSSES…FLGTTNKRAK (87 aa). The span at 1781-1822 shows a compositional bias: basic and acidic residues; the sequence is GGGRGRGREQERDKCLEGKKEKFRQRVEEGPARCHRLEELFG. Residues 1823-1834 show a composition bias toward basic residues; it reads KSRKGGPQKRGK.

It belongs to the chitin synthase family. Class IV subfamily. Post-translationally, may require proteolytic cleavage for activation.

Its subcellular location is the cell membrane. It carries out the reaction [(1-&gt;4)-N-acetyl-beta-D-glucosaminyl](n) + UDP-N-acetyl-alpha-D-glucosamine = [(1-&gt;4)-N-acetyl-beta-D-glucosaminyl](n+1) + UDP + H(+). In terms of biological role, required for the synthesis of chitin. This Meloidogyne artiellia (British root-knot nematode) protein is Chitin synthase.